A 230-amino-acid chain; its full sequence is Transmembrane ascorbate ferrireductase 2 (230 aa).

The next 2 helical transmembrane spans lie at Val-5–Leu-25 and Val-50–Tyr-70. Residues Val-14–Val-218 enclose the Cytochrome b561 domain. His-51 is a binding site for heme b. Residues Lys-77 and Lys-81 each contribute to the L-ascorbate site. A helical transmembrane segment spans residues Leu-82–Ala-102. A heme b-binding site is contributed by His-84. 3 residues coordinate monodehydro-L-ascorbate radical: Phe-105, His-106, and Tyr-115. Residue His-118 participates in heme b binding. A helical membrane pass occupies residues Trp-120 to Tyr-140. Positions 140, 150, and 151 each coordinate L-ascorbate. Heme b is bound at residue His-157. Residues His-157 to Leu-177 form a helical membrane-spanning segment. Residues Phe-182 and Asn-186 each contribute to the monodehydro-L-ascorbate radical site. Residues Leu-198–Val-218 traverse the membrane as a helical segment.

In terms of assembly, homodimer. The cofactor is heme b. As to expression, expressed in roots, seedlings, leaves and flowers. Expressed in the L1 layer of the shoot apex, in the epidermis of leaf primordia and young leaves and in vascular bundles. In the differentiation zone of the root, detected in the pericycle and in the epidermis, but not in the cortex. Strongly expressed in the cortical region of the root tip, in the meristematic tissue and in the epidermal cell layer of lateral roots, but not in the root caps. Highly expressed in unfertilized ovules. In mature embryos, expressed in the epidermis, cotyledon tips and root tips.

The protein resides in the membrane. It catalyses the reaction Fe(3+)(out) + L-ascorbate(in) = monodehydro-L-ascorbate radical(in) + Fe(2+)(out) + H(+). Two-heme-containing cytochrome. Catalyzes ascorbate-dependent transmembrane ferric-chelate reduction. The chain is Transmembrane ascorbate ferrireductase 2 (CYB561B) from Arabidopsis thaliana (Mouse-ear cress).